The primary structure comprises 600 residues: Zinc metalloproteinase-disintegrin-like stejnihagin-A (600 aa).

Residues 1-20 (MIEVLLVTICLAVFPYQGSS) form the signal peptide. The propeptide occupies 21–191 (IILESGNVND…KASQLVVTAE (171 aa)). Gln192 is modified (pyrrolidone carboxylic acid). The region spanning 198–389 (RYVKLAIVAD…YNPQCILNAP (192 aa)) is the Peptidase M12B domain. Intrachain disulfides connect Cys306–Cys384, Cys346–Cys368, and Cys348–Cys351. Asn317 carries N-linked (GlcNAc...) asparagine glycosylation. His331 provides a ligand contact to Zn(2+). Residue Glu332 is part of the active site. Zn(2+)-binding residues include His335 and His341. The N-linked (GlcNAc...) asparagine glycan is linked to Asn367. In terms of domain architecture, Disintegrin spans 397 to 483 (PPVCGNELLE…DCPTDDFHRN (87 aa)). 6 residues coordinate Ca(2+): Val399, Asn402, Leu404, Glu406, Glu409, and Asp412. 14 cysteine pairs are disulfide-bonded: Cys400-Cys429, Cys411-Cys424, Cys413-Cys419, Cys423-Cys446, Cys437-Cys443, Cys442-Cys468, Cys455-Cys475, Cys462-Cys494, Cys487-Cys499, Cys506-Cys556, Cys521-Cys565, Cys534-Cys544, Cys551-Cys587, and Cys581-Cys593. Positions 461–463 (ECD) match the D/ECD-tripeptide motif. A glycan (N-linked (GlcNAc...) asparagine) is linked at Asn568.

It belongs to the venom metalloproteinase (M12B) family. P-III subfamily. P-IIIa sub-subfamily. As to quaternary structure, monomer. Requires Zn(2+) as cofactor. As to expression, expressed by the venom gland.

It is found in the secreted. Functionally, this metalloproteinase-disintegrin-like impairs hemostasis in the envenomed animal. The sequence is that of Zinc metalloproteinase-disintegrin-like stejnihagin-A from Trimeresurus stejnegeri (Chinese green tree viper).